We begin with the raw amino-acid sequence, 211 residues long: Pyridoxine/pyridoxamine 5'-phosphate oxidase (211 aa).

Substrate-binding positions include 7 to 10 (RREY) and K65. FMN is bound by residues 60-65 (RIVLLK), 75-76 (YT), R81, K82, and Q104. Y122, R126, and S130 together coordinate substrate. FMN-binding positions include 139 to 140 (QS) and W184. Residue 190-192 (RLH) participates in substrate binding. R194 contacts FMN.

The protein belongs to the pyridoxamine 5'-phosphate oxidase family. In terms of assembly, homodimer. Requires FMN as cofactor.

The catalysed reaction is pyridoxamine 5'-phosphate + O2 + H2O = pyridoxal 5'-phosphate + H2O2 + NH4(+). It carries out the reaction pyridoxine 5'-phosphate + O2 = pyridoxal 5'-phosphate + H2O2. Its pathway is cofactor metabolism; pyridoxal 5'-phosphate salvage; pyridoxal 5'-phosphate from pyridoxamine 5'-phosphate: step 1/1. It functions in the pathway cofactor metabolism; pyridoxal 5'-phosphate salvage; pyridoxal 5'-phosphate from pyridoxine 5'-phosphate: step 1/1. Catalyzes the oxidation of either pyridoxine 5'-phosphate (PNP) or pyridoxamine 5'-phosphate (PMP) into pyridoxal 5'-phosphate (PLP). The chain is Pyridoxine/pyridoxamine 5'-phosphate oxidase from Vibrio vulnificus (strain CMCP6).